The chain runs to 98 residues: Cystatin-B (98 aa).

At Met1 the chain carries N-acetylmethionine. The Secondary area of contact signature appears at 46-50; it reads QIVAG.

The protein belongs to the cystatin family. In terms of tissue distribution, widely expressed. Highest expression in heart, liver and kidney. Lower levels in brain, lung and skeletal muscle. Lowest levels in spleen and testis.

The protein resides in the cytoplasm. This is an intracellular thiol proteinase inhibitor. The protein is Cystatin-B (Cstb) of Mus musculus (Mouse).